The primary structure comprises 20 residues: EWEPVQNGGSSYYMVPRIWA.

It belongs to the protease inhibitor I3 (leguminous Kunitz-type inhibitor) family.

In terms of biological role, inhibits soybean trypsin. Has antifungal activity against R.cerealis, A.brassicae and A.niger, and weak antifungal activity against F.oxysporum. The chain is Antifungal protein from Cullen corylifolium (Malaysian scurfpea).